A 384-amino-acid polypeptide reads, in one-letter code: PqqA peptide cyclase (384 aa).

Positions 14 to 226 constitute a Radical SAM core domain; sequence IPAPVGLLAE…IRIVEAARER (213 aa). Residues Cys-28, Cys-32, and Cys-35 each contribute to the [4Fe-4S] cluster site.

It belongs to the radical SAM superfamily. PqqE family. As to quaternary structure, interacts with PqqD. The interaction is necessary for activity of PqqE. [4Fe-4S] cluster serves as cofactor.

The catalysed reaction is [PQQ precursor protein] + S-adenosyl-L-methionine = E-Y cross-linked-[PQQ precursor protein] + 5'-deoxyadenosine + L-methionine + H(+). The protein operates within cofactor biosynthesis; pyrroloquinoline quinone biosynthesis. Its function is as follows. Catalyzes the cross-linking of a glutamate residue and a tyrosine residue in the PqqA protein as part of the biosynthesis of pyrroloquinoline quinone (PQQ). This is PqqA peptide cyclase from Methylorubrum populi (strain ATCC BAA-705 / NCIMB 13946 / BJ001) (Methylobacterium populi).